The primary structure comprises 428 residues: Spermidine/putrescine import ATP-binding protein PotA (428 aa).

The ABC transporter domain occupies 6 to 238 (IEFKNVSKTY…PINHFVADFI (233 aa)). Residue 40–47 (GASGSGKS) participates in ATP binding.

It belongs to the ABC transporter superfamily. Spermidine/putrescine importer (TC 3.A.1.11.1) family. As to quaternary structure, the complex is composed of two ATP-binding proteins (PotA), two transmembrane proteins (PotB and PotC) and a solute-binding protein (PotD).

It is found in the cell membrane. The enzyme catalyses ATP + H2O + polyamine-[polyamine-binding protein]Side 1 = ADP + phosphate + polyamineSide 2 + [polyamine-binding protein]Side 1.. Functionally, part of the ABC transporter complex PotABCD involved in spermidine/putrescine import. Responsible for energy coupling to the transport system. The sequence is that of Spermidine/putrescine import ATP-binding protein PotA from Lactococcus lactis subsp. lactis (strain IL1403) (Streptococcus lactis).